Consider the following 84-residue polypeptide: Large ribosomal subunit protein bL31B (84 aa).

Belongs to the bacterial ribosomal protein bL31 family. Type B subfamily. Part of the 50S ribosomal subunit.

This Alkalilimnicola ehrlichii (strain ATCC BAA-1101 / DSM 17681 / MLHE-1) protein is Large ribosomal subunit protein bL31B.